The following is a 660-amino-acid chain: DNA mismatch repair protein MutL (660 aa).

The protein belongs to the DNA mismatch repair MutL/HexB family.

Functionally, this protein is involved in the repair of mismatches in DNA. It is required for dam-dependent methyl-directed DNA mismatch repair. May act as a 'molecular matchmaker', a protein that promotes the formation of a stable complex between two or more DNA-binding proteins in an ATP-dependent manner without itself being part of a final effector complex. The chain is DNA mismatch repair protein MutL from Streptococcus pyogenes serotype M12 (strain MGAS2096).